The chain runs to 314 residues: Serine acetyltransferase 1, chloroplastic (314 aa).

This sequence belongs to the transferase hexapeptide repeat family. Homomultimer. Interacts with OASA1 and CYP20-3. Component of the cysteine synthase complex (CSC) composed of two OAS-TL dimers and one SAT hexamer. As to expression, mostly expressed in leaves. Localized in cortex, trichomes and vascular tissues, particularly in phloem.

It is found in the plastid. Its subcellular location is the chloroplast. The protein resides in the cytoplasm. The enzyme catalyses L-serine + acetyl-CoA = O-acetyl-L-serine + CoA. The protein operates within amino-acid biosynthesis; L-cysteine biosynthesis; L-cysteine from L-serine: step 1/2. Functionally, serine acetyltransferase which catalyzes the formation of O-acetyl-L-serine from acetyl-CoA and L-serine. Also displays O-acetylserine (thio1)-lyase activity in vitro. May be involved in detoxification process by mediating the production of glutathione. This is Serine acetyltransferase 1, chloroplastic (SAT1) from Arabidopsis thaliana (Mouse-ear cress).